The primary structure comprises 249 residues: Chitooligosaccharide deacetylase (249 aa).

Mg(2+)-binding residues include H61 and H125.

This sequence belongs to the YdjC deacetylase family. ChbG subfamily. Homodimer. Requires Mg(2+) as cofactor.

It is found in the cytoplasm. It catalyses the reaction N,N'-diacetylchitobiose + H2O = N-acetyl-beta-D-glucosaminyl-(1-&gt;4)-D-glucosamine + acetate. The catalysed reaction is diacetylchitobiose-6'-phosphate + H2O = N'-monoacetylchitobiose-6'-phosphate + acetate. It functions in the pathway glycan degradation; chitin degradation. Functionally, involved in the degradation of chitin. ChbG is essential for growth on the acetylated chitooligosaccharides chitobiose and chitotriose but is dispensable for growth on cellobiose and chitosan dimer, the deacetylated form of chitobiose. Deacetylation of chitobiose-6-P and chitotriose-6-P is necessary for both the activation of the chb promoter by the regulatory protein ChbR and the hydrolysis of phosphorylated beta-glucosides by the phospho-beta-glucosidase ChbF. Catalyzes the removal of only one acetyl group from chitobiose-6-P to yield monoacetylchitobiose-6-P, the inducer of ChbR and the substrate of ChbF. This Escherichia coli O7:K1 (strain IAI39 / ExPEC) protein is Chitooligosaccharide deacetylase.